We begin with the raw amino-acid sequence, 326 residues long: tRNA-modifying protein YgfZ (326 aa).

Folate-binding residues include tryptophan 27 and tryptophan 189.

The protein belongs to the tRNA-modifying YgfZ family.

It localises to the cytoplasm. Folate-binding protein involved in regulating the level of ATP-DnaA and in the modification of some tRNAs. It is probably a key factor in regulatory networks that act via tRNA modification, such as initiation of chromosomal replication. This is tRNA-modifying protein YgfZ from Salmonella typhimurium (strain LT2 / SGSC1412 / ATCC 700720).